A 347-amino-acid polypeptide reads, in one-letter code: L-threonine 3-dehydrogenase (347 aa).

A Zn(2+)-binding site is contributed by C43. Residues T45 and H48 each act as charge relay system in the active site. Zn(2+) contacts are provided by H68, E69, C98, C101, C104, and C112. Residues I180, D200, R205, 267–269 (LSL), and 292–293 (IT) each bind NAD(+).

This sequence belongs to the zinc-containing alcohol dehydrogenase family. In terms of assembly, homotetramer. It depends on Zn(2+) as a cofactor.

It localises to the cytoplasm. The enzyme catalyses L-threonine + NAD(+) = (2S)-2-amino-3-oxobutanoate + NADH + H(+). Its pathway is amino-acid degradation; L-threonine degradation via oxydo-reductase pathway; glycine from L-threonine: step 1/2. Functionally, catalyzes the NAD(+)-dependent oxidation of L-threonine to 2-amino-3-ketobutyrate. The polypeptide is L-threonine 3-dehydrogenase (Bacillus subtilis (strain 168)).